The primary structure comprises 304 residues: Transcription factor bHLH94 (304 aa).

Positions 86–107 (VESHPPPQHRRKRRRTRNCKNK) are disordered. Residues 92–104 (PQHRRKRRRTRNC) show a composition bias toward basic residues. In terms of domain architecture, bHLH spans 112–163 (NQRMTHIAVERNRRKQMNEYLAVLRSLMPSSYAQRGDQASIVGGAINYVKEL).

Homodimer. Expressed constitutively in roots, leaves, stems, and flowers.

The protein resides in the nucleus. The protein is Transcription factor bHLH94 (BHLH94) of Arabidopsis thaliana (Mouse-ear cress).